Here is a 384-residue protein sequence, read N- to C-terminus: S-adenosylmethionine synthase (384 aa).

Residue His-15 coordinates ATP. Asp-17 contributes to the Mg(2+) binding site. Glu-43 is a K(+) binding site. 2 residues coordinate L-methionine: Glu-56 and Gln-99. The flexible loop stretch occupies residues 99–109; that stretch reads QSADINQGVDR. ATP-binding positions include 164–166, 230–231, Asp-239, 245–246, Ala-262, and Lys-266; these read DAK, RF, and RK. Asp-239 serves as a coordination point for L-methionine. Lys-270 provides a ligand contact to L-methionine.

Belongs to the AdoMet synthase family. In terms of assembly, homotetramer; dimer of dimers. It depends on Mg(2+) as a cofactor. K(+) serves as cofactor.

The protein localises to the cytoplasm. It catalyses the reaction L-methionine + ATP + H2O = S-adenosyl-L-methionine + phosphate + diphosphate. It functions in the pathway amino-acid biosynthesis; S-adenosyl-L-methionine biosynthesis; S-adenosyl-L-methionine from L-methionine: step 1/1. Functionally, catalyzes the formation of S-adenosylmethionine (AdoMet) from methionine and ATP. The overall synthetic reaction is composed of two sequential steps, AdoMet formation and the subsequent tripolyphosphate hydrolysis which occurs prior to release of AdoMet from the enzyme. This chain is S-adenosylmethionine synthase, found in Haemophilus influenzae (strain ATCC 51907 / DSM 11121 / KW20 / Rd).